Here is a 289-residue protein sequence, read N- to C-terminus: Cbb3-type cytochrome c oxidase subunit FixP (289 aa).

At 1-33 the chain is on the cytoplasmic side; sequence MADKHKHVDEVSGVETTGHEWDGIRELNNPMPR. Residues 34 to 56 form a helical membrane-spanning segment; sequence WWVYSFYATIIWAIGYAIAYPSW. The Periplasmic portion of the chain corresponds to 57–289; that stretch reads PMLTEATKGM…VFVHSLGGGE (233 aa). 2 consecutive Cytochrome c domains span residues 110–198 and 205–286; these read FAVS…VSLT and HLVQ…HSLG. The heme c site is built by Cys123, Cys126, His127, Met175, Cys218, Cys221, His222, and Met263.

This sequence belongs to the CcoP / FixP family. As to quaternary structure, component of the cbb3-type cytochrome c oxidase at least composed of FixN, FixO, FixQ and FixP. It depends on heme c as a cofactor.

The protein resides in the cell inner membrane. The protein operates within energy metabolism; oxidative phosphorylation. Functionally, C-type cytochrome. Part of the cbb3-type cytochrome c oxidase complex. FixP subunit is required for transferring electrons from donor cytochrome c via its heme groups to FixO subunit. From there, electrons are shuttled to the catalytic binuclear center of FixN subunit where oxygen reduction takes place. The complex also functions as a proton pump. This Rhizobium meliloti (strain 1021) (Ensifer meliloti) protein is Cbb3-type cytochrome c oxidase subunit FixP.